The following is a 205-amino-acid chain: Imidazoleglycerol-phosphate dehydratase (205 aa).

The protein belongs to the imidazoleglycerol-phosphate dehydratase family.

The protein localises to the cytoplasm. It catalyses the reaction D-erythro-1-(imidazol-4-yl)glycerol 3-phosphate = 3-(imidazol-4-yl)-2-oxopropyl phosphate + H2O. It functions in the pathway amino-acid biosynthesis; L-histidine biosynthesis; L-histidine from 5-phospho-alpha-D-ribose 1-diphosphate: step 6/9. This chain is Imidazoleglycerol-phosphate dehydratase, found in Chloroflexus aggregans (strain MD-66 / DSM 9485).